Here is a 953-residue protein sequence, read N- to C-terminus: TPR repeat-containing protein ZIP4 (953 aa).

The TPR 1 repeat unit spans residues 129–162; it reads ASFFHRSGLAWLDLGRVDLASACFEKATPLVSAA. The tract at residues 248 to 269 is disordered; sequence AASPSSSSPRTPPYGGATPKTP. TPR repeat units follow at residues 432–465 and 473–506; these read HALLWNCGTEHFRAKNYDTSADLIERSMLYVSRD and ADCFRVLSICHIALQHLDRALEFVNEAYKVEPNI. The disordered stretch occupies residues 925–953; it reads VSGDEPDECSQEEAPKASISGSMSQPVLV. A compositionally biased stretch (polar residues) spans 943 to 953; the sequence is ISGSMSQPVLV.

In terms of assembly, interacts with HEI10 and SHOC1.

The protein localises to the nucleus. It is found in the chromosome. Functionally, required for crossover formation, complete synapsis of homologous chromosomes and bivalent formation during meiosis. Is specific to recombination events resulting in interference-sensitive crossovers (class I meiotic crossover) and works cooperatively with MER3 to promote crossovers. This is TPR repeat-containing protein ZIP4 from Oryza sativa subsp. japonica (Rice).